The following is a 344-amino-acid chain: MSIKPIEYRDGVVRMIDQRLLPTQELWLEYRDYQAVAEAILTMVVRGAPAIGVAAAYGAALGARDIEADSFESFLAALKNVCDTLAATRPTAVNLFWALERMQAKARELAALPLDAIKAALMDEAQAIAAQDDAINRAMGRHGAELIADNARVLTHCNAGALATGGYGTALGVIRAAVESGKKISVLADETRPFLQGSRLTAWELHKDGIPVTLICDNMAGALMRQGEIDCVIVGADRIAANGDVANKIGTYSVAVLAKEHGLPFYVAAPLSTIDLKIPDGDHIPIEERDTSEVTHCGPTRLAPEGINVRNPAFDVTPAGLITAIITERGVVRGDYVRGLANLF.

Substrate contacts are provided by residues 46 to 48, arginine 89, and glutamine 196; that span reads RGA. Aspartate 237 functions as the Proton donor in the catalytic mechanism. A substrate-binding site is contributed by 247–248; that stretch reads NK.

It belongs to the eIF-2B alpha/beta/delta subunits family. MtnA subfamily.

It carries out the reaction 5-(methylsulfanyl)-alpha-D-ribose 1-phosphate = 5-(methylsulfanyl)-D-ribulose 1-phosphate. Its pathway is amino-acid biosynthesis; L-methionine biosynthesis via salvage pathway; L-methionine from S-methyl-5-thio-alpha-D-ribose 1-phosphate: step 1/6. In terms of biological role, catalyzes the interconversion of methylthioribose-1-phosphate (MTR-1-P) into methylthioribulose-1-phosphate (MTRu-1-P). This chain is Methylthioribose-1-phosphate isomerase, found in Syntrophotalea carbinolica (strain DSM 2380 / NBRC 103641 / GraBd1) (Pelobacter carbinolicus).